Consider the following 479-residue polypeptide: Endo-beta-1,6-galactanase (479 aa).

The first 20 residues, 1–20, serve as a signal peptide directing secretion; it reads MRSIVLPSLALALFSQRARA. Asn89 carries N-linked (GlcNAc...) asparagine glycosylation. The active-site Proton donor is the Glu210. An N-linked (GlcNAc...) asparagine glycan is attached at Asn271. Glu311 (nucleophile) is an active-site residue. A glycan (N-linked (GlcNAc...) asparagine) is linked at Asn358.

The catalysed reaction is Endohydrolysis of (1-&gt;6)-beta-D-galactosidic linkages in arabinogalactan proteins and (1-&gt;3):(1-&gt;6)-beta-galactans to yield galactose and beta-(1-&gt;6)-galactaobiose as the final products.. Hydrolyzes galactooligomers with a degree of polymerization higher than 3. Hydrolyzes radish root arabinogalactan-protein. Does not hydrolyze dextran, arabinan, starch, laminarin, beta-1,4- and beta-1,3-galactans, larch wood arabinogalactan or acid-insoluble polygalacturonic acid. The protein is Endo-beta-1,6-galactanase of Hypocrea rufa (Trichoderma viride).